A 363-amino-acid polypeptide reads, in one-letter code: S-adenosylmethionine:tRNA ribosyltransferase-isomerase (363 aa).

The protein belongs to the QueA family. In terms of assembly, monomer.

It is found in the cytoplasm. It catalyses the reaction 7-aminomethyl-7-carbaguanosine(34) in tRNA + S-adenosyl-L-methionine = epoxyqueuosine(34) in tRNA + adenine + L-methionine + 2 H(+). It participates in tRNA modification; tRNA-queuosine biosynthesis. Transfers and isomerizes the ribose moiety from AdoMet to the 7-aminomethyl group of 7-deazaguanine (preQ1-tRNA) to give epoxyqueuosine (oQ-tRNA). The polypeptide is S-adenosylmethionine:tRNA ribosyltransferase-isomerase (Synechococcus sp. (strain RCC307)).